The chain runs to 494 residues: Glutamate--tRNA ligase (494 aa).

Residues 9-19 (PSPTGDPHLGT) carry the 'HIGH' region motif. The 'KMSKS' region signature appears at 250–254 (KLSKR). Position 253 (K253) interacts with ATP.

The protein belongs to the class-I aminoacyl-tRNA synthetase family. Glutamate--tRNA ligase type 1 subfamily. In terms of assembly, monomer.

The protein resides in the cytoplasm. It carries out the reaction tRNA(Glu) + L-glutamate + ATP = L-glutamyl-tRNA(Glu) + AMP + diphosphate. In terms of biological role, catalyzes the attachment of glutamate to tRNA(Glu) in a two-step reaction: glutamate is first activated by ATP to form Glu-AMP and then transferred to the acceptor end of tRNA(Glu). This is Glutamate--tRNA ligase from Pseudoalteromonas translucida (strain TAC 125).